The following is a 274-amino-acid chain: Putative pyruvate, phosphate dikinase regulatory protein (274 aa).

ADP is bound at residue 153–160 (GISRTSKT).

Belongs to the pyruvate, phosphate/water dikinase regulatory protein family. PDRP subfamily.

The catalysed reaction is N(tele)-phospho-L-histidyl/L-threonyl-[pyruvate, phosphate dikinase] + ADP = N(tele)-phospho-L-histidyl/O-phospho-L-threonyl-[pyruvate, phosphate dikinase] + AMP + H(+). The enzyme catalyses N(tele)-phospho-L-histidyl/O-phospho-L-threonyl-[pyruvate, phosphate dikinase] + phosphate + H(+) = N(tele)-phospho-L-histidyl/L-threonyl-[pyruvate, phosphate dikinase] + diphosphate. Bifunctional serine/threonine kinase and phosphorylase involved in the regulation of the pyruvate, phosphate dikinase (PPDK) by catalyzing its phosphorylation/dephosphorylation. This is Putative pyruvate, phosphate dikinase regulatory protein from Bartonella henselae (strain ATCC 49882 / DSM 28221 / CCUG 30454 / Houston 1) (Rochalimaea henselae).